We begin with the raw amino-acid sequence, 359 residues long: Bergaptol O-methyltransferase (359 aa).

His126 is a bergaptol binding site. Ser179, Gly203, Asp226, Asp246, and Lys260 together coordinate S-adenosyl-L-homocysteine. Residue His264 coordinates bergaptol. His264 functions as the Proton acceptor in the catalytic mechanism.

Belongs to the class I-like SAM-binding methyltransferase superfamily. Cation-independent O-methyltransferase family. COMT subfamily. As to quaternary structure, homodimer. As to expression, mostly expressed in roots and, to a lower extent, in stems and leaves.

Its subcellular location is the cytoplasm. The catalysed reaction is bergaptol + S-adenosyl-L-methionine = bergapten + S-adenosyl-L-homocysteine. It participates in aromatic compound metabolism. Its pathway is secondary metabolite biosynthesis. Its function is as follows. O-methyltransferase involved in the biosynthesis of furocoumarins natural products such as bergapten, a photosensitizer used for medical purpose such as treating psoriasis and vitiligo or facilitating resistance to microbial infection and other stresses. Catalyzes specifically the methylation of bergaptol. Not active on xanthotol, isoscopoletin, scopoletin and esculetin. The polypeptide is Bergaptol O-methyltransferase (Kitagawia praeruptora (Peucedanum praeruptorum)).